The chain runs to 221 residues: Ependymin-1 (221 aa).

Positions 1-21 (MQAFAVAALSIWLCLGATTLA) are cleaved as a signal peptide. N-linked (GlcNAc...) asparagine glycosylation is found at N33, N73, and N97.

It belongs to the ependymin family. Post-translationally, binds calcium through the terminal sialic acids. In terms of tissue distribution, EPDs are synthesized in the meninx and secreted in the cerebrospinal fluid.

The protein resides in the secreted. Its function is as follows. May play a role in neural plasticity. May be involved during axon regeneration. This Oncorhynchus mykiss (Rainbow trout) protein is Ependymin-1 (epd1).